Consider the following 360-residue polypeptide: Phospho-N-acetylmuramoyl-pentapeptide-transferase (360 aa).

Transmembrane regions (helical) follow at residues 25–45 (RAIL…PWVI), 73–93 (TMGG…WADL), 97–117 (YVLA…VDDY), 132–152 (WKYF…FVTA), 168–188 (VAWQ…VGFS), 199–219 (GLAI…AYLV), 236–256 (SGEL…FLWF), 263–283 (VFMG…IAVI), 288–308 (IVFF…ILQV), and 339–359 (IVRF…TLKI).

Belongs to the glycosyltransferase 4 family. MraY subfamily. Mg(2+) is required as a cofactor.

It localises to the cell inner membrane. The enzyme catalyses UDP-N-acetyl-alpha-D-muramoyl-L-alanyl-gamma-D-glutamyl-meso-2,6-diaminopimeloyl-D-alanyl-D-alanine + di-trans,octa-cis-undecaprenyl phosphate = di-trans,octa-cis-undecaprenyl diphospho-N-acetyl-alpha-D-muramoyl-L-alanyl-D-glutamyl-meso-2,6-diaminopimeloyl-D-alanyl-D-alanine + UMP. It participates in cell wall biogenesis; peptidoglycan biosynthesis. Its function is as follows. Catalyzes the initial step of the lipid cycle reactions in the biosynthesis of the cell wall peptidoglycan: transfers peptidoglycan precursor phospho-MurNAc-pentapeptide from UDP-MurNAc-pentapeptide onto the lipid carrier undecaprenyl phosphate, yielding undecaprenyl-pyrophosphoryl-MurNAc-pentapeptide, known as lipid I. The sequence is that of Phospho-N-acetylmuramoyl-pentapeptide-transferase from Teredinibacter turnerae (strain ATCC 39867 / T7901).